The chain runs to 61 residues: Protein TfaX (61 aa).

The protein belongs to the tfa family.

Its function is as follows. Might play a role in cell growth during glycolysis. The sequence is that of Protein TfaX (tfaX) from Escherichia coli (strain K12).